The primary structure comprises 540 residues: MNPSTAQAHAVVDELIRGGVRDVVLCPGSRNAPLAFALHDADKAGRLRLHVRIDERTAGFLAVGLAAASGSPVPVAMTSGTAVANLGPAVVEANYARVPLIVLSANRPYELLGTGANQTMEQLGYFGTQVRAAISIGLAEEGSEKIEAQNPHWRSATCRVLAAAKGSRTANAGPVQFDIPLREPLVPDRDGGPIPAGRPGGAPWTYTPDVTFDEPVEIDLTADTVVIAGHGAATHPNLSMLPTVAEPTAPQPDNPVHPLALTLLHPQQVIMLGRPTLHRQVSSLLADSRIPVYALTTGPRWPDVSGNSQATGTRAVTSGSPDPAWLQRCAHAHHKALDAVRGQLSTHPLTTGLHVAAHVCGSLRDGDQLVLGASNPVRDAALVPWGAKDVRVRSNRGVAGIDGTVSTAIGAALAHRGGRTVALIGDLTFVHDSSGLLIGPTEPRPENLTIVVSNDNGGGIFELLEQGDPRFHDVSSRIFGTPHDVDIAALCRAYHVDSQSISVEELGPALDEPARGIRVLEVKADRSTLRELHAAIRAAL.

This sequence belongs to the TPP enzyme family. MenD subfamily. In terms of assembly, homodimer. Mg(2+) is required as a cofactor. It depends on Mn(2+) as a cofactor. The cofactor is thiamine diphosphate.

The enzyme catalyses isochorismate + 2-oxoglutarate + H(+) = 5-enolpyruvoyl-6-hydroxy-2-succinyl-cyclohex-3-ene-1-carboxylate + CO2. The protein operates within quinol/quinone metabolism; 1,4-dihydroxy-2-naphthoate biosynthesis; 1,4-dihydroxy-2-naphthoate from chorismate: step 2/7. It participates in quinol/quinone metabolism; menaquinone biosynthesis. Functionally, catalyzes the thiamine diphosphate-dependent decarboxylation of 2-oxoglutarate and the subsequent addition of the resulting succinic semialdehyde-thiamine pyrophosphate anion to isochorismate to yield 2-succinyl-5-enolpyruvyl-6-hydroxy-3-cyclohexene-1-carboxylate (SEPHCHC). The protein is 2-succinyl-5-enolpyruvyl-6-hydroxy-3-cyclohexene-1-carboxylate synthase of Mycobacteroides abscessus (strain ATCC 19977 / DSM 44196 / CCUG 20993 / CIP 104536 / JCM 13569 / NCTC 13031 / TMC 1543 / L948) (Mycobacterium abscessus).